The following is a 340-amino-acid chain: Heat-inducible transcription repressor HrcA (340 aa).

The protein belongs to the HrcA family.

Negative regulator of class I heat shock genes (grpE-dnaK-dnaJ and groELS operons). Prevents heat-shock induction of these operons. The polypeptide is Heat-inducible transcription repressor HrcA (Burkholderia cenocepacia (strain ATCC BAA-245 / DSM 16553 / LMG 16656 / NCTC 13227 / J2315 / CF5610) (Burkholderia cepacia (strain J2315))).